A 468-amino-acid chain; its full sequence is 6-phosphogluconate dehydrogenase, NAD(+)-dependent, decarboxylating (468 aa).

NAD(+) is bound by residues 9–14 (GLGVMG), 32–34 (NYT), 73–75 (VTA), and Asn101. Substrate is bound by residues Asn101 and 127–129 (SGG). Lys181 serves as the catalytic Proton acceptor. 184–185 (HN) is a binding site for substrate. Glu188 serves as the catalytic Proton donor. Substrate contacts are provided by Tyr189, Lys259, Arg286, Arg445, and His451.

This sequence belongs to the 6-phosphogluconate dehydrogenase family. In terms of assembly, homodimer.

It catalyses the reaction 6-phospho-D-gluconate + NAD(+) = D-ribulose 5-phosphate + CO2 + NADH. Functionally, catalyzes the oxidative decarboxylation of 6-phosphogluconate to ribulose 5-phosphate and CO(2), with concomitant reduction of NAD to NADH. Does not contribute to oxidative pentose phosphate (PP) pathway fluxes during growth on glucose. The functional role of GntZ remains obscure. This is 6-phosphogluconate dehydrogenase, NAD(+)-dependent, decarboxylating (gntZ) from Bacillus subtilis (strain 168).